The sequence spans 363 residues: Ribosomal RNA large subunit methyltransferase M (363 aa).

S-adenosyl-L-methionine is bound by residues Ser-194, 227 to 230, Asp-246, Asp-266, and Asp-284; that span reads CPGG. The active-site Proton acceptor is the Lys-313.

It belongs to the class I-like SAM-binding methyltransferase superfamily. RNA methyltransferase RlmE family. RlmM subfamily. In terms of assembly, monomer.

The protein resides in the cytoplasm. The enzyme catalyses cytidine(2498) in 23S rRNA + S-adenosyl-L-methionine = 2'-O-methylcytidine(2498) in 23S rRNA + S-adenosyl-L-homocysteine + H(+). Catalyzes the 2'-O-methylation at nucleotide C2498 in 23S rRNA. The sequence is that of Ribosomal RNA large subunit methyltransferase M from Haemophilus influenzae (strain 86-028NP).